Here is a 420-residue protein sequence, read N- to C-terminus: Calreticulin (420 aa).

Positions 1 to 18 (MKWGVVAVLATLVVAASA) are cleaved as a signal peptide. C106 and C140 are joined by a disulfide. 4 residues coordinate an alpha-D-glucoside: Y110, K112, Y131, and D138. A run of 7 repeats spans residues 194–205 (VASGSLYEDWDM), 213–224 (DPKASKPEDWDE), 230–241 (DPEDKKPEGWDD), 248–259 (DKDAKKPEDWDD), 263–273 (GTWEPPMIPNP), 277–287 (GEWKAKMIKNP), and 291–301 (GIWVAPDIDNP). The interval 194–259 (VASGSLYEDW…DAKKPEDWDD (66 aa)) is 4 X approximate repeats. Residues 210-220 (TIKDPKASKPE) are compositionally biased toward basic and acidic residues. The interval 210-272 (TIKDPKASKP…GTWEPPMIPN (63 aa)) is disordered. The segment covering 221 to 230 (DWDEREEIAD) has biased composition (acidic residues). The tract at residues 263-301 (GTWEPPMIPNPEYKGEWKAKMIKNPAYKGIWVAPDIDNP) is 3 X approximate repeats. E321 provides a ligand contact to an alpha-D-glucoside. Basic and acidic residues predominate over residues 357-376 (EEKAMFDKVKKEEDEKKAKD). The segment at 357 to 420 (EEKAMFDKVK…EEEESGHDEL (64 aa)) is disordered. 2 stretches are compositionally biased toward acidic residues: residues 385–398 (EAAEEEDDEYEDKE) and 411–420 (EEEESGHDEL). A Prevents secretion from ER motif is present at residues 417–420 (HDEL).

It belongs to the calreticulin family.

It is found in the endoplasmic reticulum lumen. In terms of biological role, molecular calcium-binding chaperone promoting folding, oligomeric assembly and quality control in the ER via the calreticulin/calnexin cycle. This lectin may interact transiently with almost all of the monoglucosylated glycoproteins that are synthesized in the ER. The chain is Calreticulin from Chlamydomonas reinhardtii (Chlamydomonas smithii).